A 234-amino-acid chain; its full sequence is uncharacterized protein (234 aa).

Disordered regions lie at residues 1–65 (MTSV…RRGP) and 182–234 (ARGA…GRKT).

This is an uncharacterized protein from Homo sapiens (Human).